Here is a 448-residue protein sequence, read N- to C-terminus: Adenylosuccinate synthetase (448 aa).

GTP-binding positions include 22–28 (GDEGKGK) and 50–52 (GHT). D23 (proton acceptor) is an active-site residue. Mg(2+) contacts are provided by D23 and G50. IMP contacts are provided by residues 23–26 (DEGK), 48–51 (NAGH), T139, R153, Q234, T249, and R321. The Proton donor role is filled by H51. A substrate-binding site is contributed by 317 to 323 (SVTGRPR). GTP contacts are provided by residues R323, 349 to 351 (KLD), and 431 to 433 (STG).

This sequence belongs to the adenylosuccinate synthetase family. As to quaternary structure, homodimer. Mg(2+) is required as a cofactor.

Its subcellular location is the cytoplasm. It catalyses the reaction IMP + L-aspartate + GTP = N(6)-(1,2-dicarboxyethyl)-AMP + GDP + phosphate + 2 H(+). It functions in the pathway purine metabolism; AMP biosynthesis via de novo pathway; AMP from IMP: step 1/2. Its function is as follows. Plays an important role in the de novo pathway of purine nucleotide biosynthesis. Catalyzes the first committed step in the biosynthesis of AMP from IMP. This Burkholderia thailandensis (strain ATCC 700388 / DSM 13276 / CCUG 48851 / CIP 106301 / E264) protein is Adenylosuccinate synthetase.